A 550-amino-acid chain; its full sequence is Glucose-6-phosphate isomerase (550 aa).

D-glucose 6-phosphate is bound by residues 163–164 (GS), 214–219 (SKTFTT), glutamine 358, glutamate 362, histidine 393, and lysine 515. Glutamate 362 acts as the Proton donor in catalysis. Active-site residues include histidine 393 and lysine 515.

The protein belongs to the GPI family. As to quaternary structure, homodimer.

It is found in the cytoplasm. The catalysed reaction is alpha-D-glucose 6-phosphate = beta-D-fructose 6-phosphate. The protein operates within carbohydrate degradation; glycolysis; D-glyceraldehyde 3-phosphate and glycerone phosphate from D-glucose: step 2/4. Functionally, in the cytoplasm, catalyzes the conversion of glucose-6-phosphate to fructose-6-phosphate, the second step in glycolysis, and the reverse reaction during gluconeogenesis. The chain is Glucose-6-phosphate isomerase (PGI1) from Candida albicans (strain SC5314 / ATCC MYA-2876) (Yeast).